A 582-amino-acid polypeptide reads, in one-letter code: Methionine--tRNA ligase (582 aa).

Positions 24-34 (PYIYAVPHLGN) match the 'HIGH' region motif. Zn(2+) contacts are provided by Cys-156, Cys-159, Cys-169, and Cys-172. The 'KMSKS' region motif lies at 346-350 (KFSKS). Position 349 (Lys-349) interacts with ATP.

The protein belongs to the class-I aminoacyl-tRNA synthetase family. MetG type 1 subfamily. Requires Zn(2+) as cofactor.

Its subcellular location is the cytoplasm. It carries out the reaction tRNA(Met) + L-methionine + ATP = L-methionyl-tRNA(Met) + AMP + diphosphate. Is required not only for elongation of protein synthesis but also for the initiation of all mRNA translation through initiator tRNA(fMet) aminoacylation. This Caldivirga maquilingensis (strain ATCC 700844 / DSM 13496 / JCM 10307 / IC-167) protein is Methionine--tRNA ligase.